Here is a 312-residue protein sequence, read N- to C-terminus: MARTRSDSLAAGGLNWDSLPLRLFAGGNAKFWDPADIDFSRDRADWESLTDLERDWATRLCAEFIAGEEAVTQDIQPFMAAMRAEGRLGDEMYLTQFAFEEAKHTQVFRMWLDAVGITEDLQGYLDELPAYCQMFYEELPASLDALATDPSPAAQVRASVTYNHVIEGMMALTGYYAWHRICVDRGILPGMQELVRRIGDDERRHMAWGTFTCRRHVAADDANWAVFETRMNELIPLALRNTEDGFALYDEVPFGLTMEEFQQYAADKGMRRFGTISSARGRPLAEIDVDYSPLHLEDTFADEDRKSLAASA.

Glutamate 68, glutamate 101, and histidine 104 together coordinate Mn(2+). The segment at residues 71–162 (VTQDIQPFMA…AAQVRASVTY (92 aa)) is a cross-link (3-(O4'-tyrosyl)-valine (Val-Tyr)). Glutamate 101 contributes to the Fe cation binding site. 3 residues coordinate Fe cation: glutamate 167, glutamate 202, and histidine 205.

The protein belongs to the ribonucleoside diphosphate reductase small chain family. R2-like ligand binding oxidase subfamily. In terms of assembly, homodimer. Fe cation serves as cofactor. Requires Mn(2+) as cofactor.

Functionally, probable oxidase that might be involved in lipid metabolism. This chain is R2-like ligand binding oxidase, found in Mycolicibacterium vanbaalenii (strain DSM 7251 / JCM 13017 / BCRC 16820 / KCTC 9966 / NRRL B-24157 / PYR-1) (Mycobacterium vanbaalenii).